A 428-amino-acid chain; its full sequence is 3-phosphoshikimate 1-carboxyvinyltransferase (428 aa).

3-phosphoshikimate is bound by residues Lys22, Ser23, and Arg27. Residue Lys22 coordinates phosphoenolpyruvate. Gly96 and Arg124 together coordinate phosphoenolpyruvate. Positions 170, 171, 172, 198, 314, 337, and 341 each coordinate 3-phosphoshikimate. Gln172 is a binding site for phosphoenolpyruvate. Asp314 serves as the catalytic Proton acceptor. Arg345, Arg387, and Lys412 together coordinate phosphoenolpyruvate.

The protein belongs to the EPSP synthase family. Monomer.

It is found in the cytoplasm. The catalysed reaction is 3-phosphoshikimate + phosphoenolpyruvate = 5-O-(1-carboxyvinyl)-3-phosphoshikimate + phosphate. It participates in metabolic intermediate biosynthesis; chorismate biosynthesis; chorismate from D-erythrose 4-phosphate and phosphoenolpyruvate: step 6/7. Its function is as follows. Catalyzes the transfer of the enolpyruvyl moiety of phosphoenolpyruvate (PEP) to the 5-hydroxyl of shikimate-3-phosphate (S3P) to produce enolpyruvyl shikimate-3-phosphate and inorganic phosphate. The sequence is that of 3-phosphoshikimate 1-carboxyvinyltransferase from Shewanella denitrificans (strain OS217 / ATCC BAA-1090 / DSM 15013).